A 154-amino-acid polypeptide reads, in one-letter code: Yop proteins translocation protein O (154 aa).

Residues 132–154 (ELNQQHYQEEQEQEEFLQHHRNA) are disordered.

This sequence belongs to the SpaM family.

In terms of biological role, component of the yop secretion machinery. This Yersinia pseudotuberculosis serotype I (strain IP32953) protein is Yop proteins translocation protein O (yscO).